Reading from the N-terminus, the 88-residue chain is Long neurotoxin LNTX-2 (88 aa).

Residues 1–21 form the signal peptide; the sequence is MKTLLLTLVVVTIVCLDFGYA. Cystine bridges form between Cys-24/Cys-42, Cys-35/Cys-63, Cys-67/Cys-78, and Cys-79/Cys-84.

The protein belongs to the three-finger toxin family. Long-chain subfamily. Type II alpha-neurotoxin sub-subfamily. As to expression, expressed by the venom gland.

The protein localises to the secreted. Binds with high affinity to muscular nicotinic acetylcholine receptors (nAChRs), whereas it binds with a low affinity to neuronal alpha-7/CHRNA7 nAChRs. The protein is Long neurotoxin LNTX-2 of Demansia vestigiata (Lesser black whip snake).